A 253-amino-acid polypeptide reads, in one-letter code: 5-oxoprolinase subunit A (253 aa).

Belongs to the LamB/PxpA family. As to quaternary structure, forms a complex composed of PxpA, PxpB and PxpC.

The catalysed reaction is 5-oxo-L-proline + ATP + 2 H2O = L-glutamate + ADP + phosphate + H(+). Catalyzes the cleavage of 5-oxoproline to form L-glutamate coupled to the hydrolysis of ATP to ADP and inorganic phosphate. This Bacillus anthracis (strain CDC 684 / NRRL 3495) protein is 5-oxoprolinase subunit A.